The following is a 516-amino-acid chain: Putative sel1-like repeat-containing protein R850 (516 aa).

2 Sel1-like repeats span residues 103 to 138 (ALTYNNLGFIYHNDIFKKNKVIKVISHYCKAVNMNS) and 230 to 265 (SISQYSIGTKYLGGDVTNRKYQKGIIYLKNSAKQGD).

This Acanthamoeba polyphaga (Amoeba) protein is Putative sel1-like repeat-containing protein R850.